Reading from the N-terminus, the 937-residue chain is Protein Niban 1 (937 aa).

A lipid anchor (N-myristoyl glycine) is attached at glycine 2. Phosphoserine is present on residues serine 578, serine 581, serine 595, serine 601, and serine 646. The segment covering 584–595 (DLKTSMGSNQAS) has biased composition (polar residues). Disordered regions lie at residues 584–710 (DLKT…GSLR) and 724–891 (SAPE…LGGN). The span at 640–651 (ASISGSSPPSGE) shows a compositional bias: low complexity. Polar residues predominate over residues 655–681 (VSVSGVDNSAGNPLSADNSAGPLSSHL). Residues 688–701 (EPPKDEETAHKRPE) show a composition bias toward basic and acidic residues. Phosphoserine occurs at positions 708 and 768. Composition is skewed to polar residues over residues 802–817 (PTSQ…NTSC) and 855–869 (VTVT…SSNP).

It belongs to the Niban family. Detected in brain, lung, spleen and skeletal muscle. Expressed in small renal tumors but not in normal kidney.

Its subcellular location is the cytoplasm. It localises to the membrane. Regulates phosphorylation of a number of proteins involved in translation regulation including EIF2A, EIF4EBP1 and RPS6KB1. May be involved in the endoplasmic reticulum stress response. This chain is Protein Niban 1, found in Rattus norvegicus (Rat).